A 349-amino-acid polypeptide reads, in one-letter code: Peroxidase 22 (349 aa).

An N-terminal signal peptide occupies residues Met-1–Ala-29. Gln-30 bears the Pyrrolidone carboxylic acid mark. Intrachain disulfides connect Cys-40–Cys-120, Cys-73–Cys-78, Cys-126–Cys-329, and Cys-206–Cys-238. His-71 serves as the catalytic Proton acceptor. Ca(2+)-binding residues include Asp-72, Val-75, Gly-77, Asp-79, and Ser-81. Residue Asn-86 is glycosylated (N-linked (GlcNAc...) asparagine). Pro-168 lines the substrate pocket. Asn-173 and Asn-187 each carry an N-linked (GlcNAc...) asparagine glycan. His-199 contacts heme b. Thr-200 is a Ca(2+) binding site. Residues Asn-217 and Asn-243 are each glycosylated (N-linked (GlcNAc...) asparagine). The Ca(2+) site is built by Asp-251, Thr-254, and Asp-259.

This sequence belongs to the peroxidase family. Classical plant (class III) peroxidase subfamily. Heme b is required as a cofactor. The cofactor is Ca(2+). Mainly expressed in roots.

It is found in the secreted. Its subcellular location is the vacuole. It catalyses the reaction 2 a phenolic donor + H2O2 = 2 a phenolic radical donor + 2 H2O. Its function is as follows. Removal of H(2)O(2), oxidation of toxic reductants, biosynthesis and degradation of lignin, suberization, auxin catabolism, response to environmental stresses such as wounding, pathogen attack and oxidative stress. These functions might be dependent on each isozyme/isoform in each plant tissue. The sequence is that of Peroxidase 22 (PER22) from Arabidopsis thaliana (Mouse-ear cress).